A 499-amino-acid polypeptide reads, in one-letter code: uncharacterized protein (499 aa).

This is an uncharacterized protein from Methanothermobacter thermautotrophicus (Methanobacterium thermoformicicum).